We begin with the raw amino-acid sequence, 105 residues long: Cuticle protein AMP4 (105 aa).

Residues 1 to 21 (DRDAQTLTDERNDQGDGNFRY) are disordered. Residues 16–81 (DGNFRYEFET…PSSDLLPVGP (66 aa)) enclose the Chitin-binding type R&amp;R domain.

As to expression, arthrodial membrane.

The sequence is that of Cuticle protein AMP4 from Homarus americanus (American lobster).